Here is a 172-residue protein sequence, read N- to C-terminus: Translationally-controlled tumor protein homolog (172 aa).

The TCTP domain occupies 1-172 (MKIYKDIITG…FKHGLDEEKC (172 aa)).

Belongs to the TCTP family.

The protein resides in the cytoplasm. Involved in calcium binding and microtubule stabilization. This Drosophila yakuba (Fruit fly) protein is Translationally-controlled tumor protein homolog.